The following is a 393-amino-acid chain: Protein TsgA (393 aa).

12 consecutive transmembrane segments (helical) span residues tryptophan 11–methionine 31, phenylalanine 51–proline 71, phenylalanine 78–leucine 98, threonine 101–isoleucine 121, phenylalanine 140–isoleucine 160, tryptophan 162–glycine 182, isoleucine 206–isoleucine 226, threonine 245–leucine 265, isoleucine 273–proline 293, alanine 297–leucine 317, phenylalanine 332–valine 352, and leucine 361–valine 381.

The protein belongs to the major facilitator superfamily. TsgA family.

The protein localises to the cell inner membrane. The polypeptide is Protein TsgA (Shigella boydii serotype 18 (strain CDC 3083-94 / BS512)).